The chain runs to 350 residues: MPSSPITVGLVFGGRSGEHDVSIRSAATVVRGLRSGENTERYTVQPIYIDRDGRWWGTDLAEATLTSEVAPELTTPRPPSGFQGFPEGCDAIDLWYPVLHGPNGEDGTIQGLFQLTGKPFVGAGVLGSAVSMDKQAMKSAFSSAGLSQVPYVALHASELEDAKSRSALLDRIERELNYPCFVKPANLGSSVGISKVRSRQELEAGLEQAAALDPRLVVEQGVNAREVECAVLGRRTLEASVIGEVRFDADWYDYETKYTAGRSTTLIPAPLPDPVRDRIREQALQACAAVGVHGMSRVDFFYDETNDQLWINEINTLPGFTAQSMFPMLWAASGVTLEQLVHKLIQTAGE.

An ATP-grasp domain is found at 138–346 (KSAFSSAGLS…LEQLVHKLIQ (209 aa)). Position 173-228 (173-228 (ERELNYPCFVKPANLGSSVGISKVRSRQELEAGLEQAAALDPRLVVEQGVNAREVE)) interacts with ATP. Mg(2+) contacts are provided by aspartate 299, glutamate 313, and asparagine 315.

This sequence belongs to the D-alanine--D-alanine ligase family. Requires Mg(2+) as cofactor. It depends on Mn(2+) as a cofactor.

The protein resides in the cytoplasm. The enzyme catalyses 2 D-alanine + ATP = D-alanyl-D-alanine + ADP + phosphate + H(+). It functions in the pathway cell wall biogenesis; peptidoglycan biosynthesis. Its function is as follows. Cell wall formation. In Synechococcus sp. (strain CC9605), this protein is D-alanine--D-alanine ligase.